The sequence spans 96 residues: MQIITTALVCLLLAGMWPEDVDSKSMQVPFSRCCFSFAEQEIPLRAILCYRNTSSICSNEGLIFKLKRGKEACALDTVGWVQRHRKMLRHCPSKRK.

A signal peptide spans 1-23 (MQIITTALVCLLLAGMWPEDVDS). 3 disulfides stabilise this stretch: C33–C57, C34–C73, and C49–C91. A glycan (N-linked (GlcNAc...) asparagine) is linked at N52.

It belongs to the intercrine beta (chemokine CC) family. In terms of assembly, monomer.

It is found in the secreted. Functionally, cytokine that is chemotactic for monocytes but not for neutrophils. Binds to CCR8. This is C-C motif chemokine 1 (CCL1) from Homo sapiens (Human).